The following is a 102-amino-acid chain: Small ribosomal subunit protein uS10 (102 aa).

The protein belongs to the universal ribosomal protein uS10 family. As to quaternary structure, part of the 30S ribosomal subunit.

In terms of biological role, involved in the binding of tRNA to the ribosomes. This Mesorhizobium japonicum (strain LMG 29417 / CECT 9101 / MAFF 303099) (Mesorhizobium loti (strain MAFF 303099)) protein is Small ribosomal subunit protein uS10.